The sequence spans 373 residues: MNTIGKSFRITAWGESHGKALGAVVDGCPSNLPLTGEDIQKELNRRRPGYSLFSTPRKEGDKVEILSGIFEGKTTGTPISAIVYNTNQKSKDYSHLKNTPRPGHADLSYKLKYGNYDYRGGGRSSGRTTIGHTIGGAIAKKLLDYTHNIKIIGYTTKIGNIEGDFNYYNSIENNEKMINEELINKIENNPLRCPSSNADEMKDFVLNAMENKNSVGGVIELIALNVPVGVGNPIFGKLNGELSNAIMNINAVKGVEIGRGFESAELLGSEMNDEYYYDENNNIKLKTNNCGGVLGGISCGAPLVIRVAVKPTPSISAVQSTINIENKTTENLEIGGRHDPIIVPRVIPVLESMVAIALSDLMIRGGFIHPCKL.

Arginine 46 contributes to the NADP(+) binding site. FMN-binding positions include 123 to 125, 250 to 251, glycine 295, 310 to 314, and arginine 337; these read RSS, NA, and KPTPS.

It belongs to the chorismate synthase family. FMNH2 serves as cofactor.

It catalyses the reaction 5-O-(1-carboxyvinyl)-3-phosphoshikimate = chorismate + phosphate. Its pathway is metabolic intermediate biosynthesis; chorismate biosynthesis; chorismate from D-erythrose 4-phosphate and phosphoenolpyruvate: step 7/7. In terms of biological role, catalyzes the anti-1,4-elimination of the C-3 phosphate and the C-6 proR hydrogen from 5-enolpyruvylshikimate-3-phosphate (EPSP) to yield chorismate, which is the branch point compound that serves as the starting substrate for the three terminal pathways of aromatic amino acid biosynthesis. This reaction introduces a second double bond into the aromatic ring system. This chain is Chorismate synthase, found in Methanococcus aeolicus (strain ATCC BAA-1280 / DSM 17508 / OCM 812 / Nankai-3).